The following is an 86-amino-acid chain: Small ribosomal subunit protein uS15 (86 aa).

Positions 1–22 are disordered; it reads MSVDTQKVIEDNKRSAQDTGSP. The span at 7–16 shows a compositional bias: basic and acidic residues; it reads KVIEDNKRSA.

Belongs to the universal ribosomal protein uS15 family. Part of the 30S ribosomal subunit. Forms a bridge to the 50S subunit in the 70S ribosome, contacting the 23S rRNA.

Its function is as follows. One of the primary rRNA binding proteins, it binds directly to 16S rRNA where it helps nucleate assembly of the platform of the 30S subunit by binding and bridging several RNA helices of the 16S rRNA. In terms of biological role, forms an intersubunit bridge (bridge B4) with the 23S rRNA of the 50S subunit in the ribosome. The protein is Small ribosomal subunit protein uS15 of Xanthomonas campestris pv. campestris (strain 8004).